We begin with the raw amino-acid sequence, 635 residues long: PTS system fructose-specific EIIABC component (635 aa).

The region spanning 5 to 149 is the PTS EIIA type-2 domain; sequence ELLTKHTIKL…DAIIDIINQH (145 aa). His67 acts as the Tele-phosphohistidine intermediate; for EIIA activity in catalysis. His67 bears the Phosphohistidine; by HPr mark. The interval 149–168 is disordered; it reads HDKDDDEEEEEEEAAPAPAG. Positions 152-162 are enriched in acidic residues; that stretch reads DDDEEEEEEEA. One can recognise a PTS EIIB type-2 domain in the interval 172-267; sequence ILAVTACPTG…PQELIEKAMN (96 aa). Residue Cys178 is the Phosphocysteine intermediate; for EIIB activity of the active site. Cys178 carries the phosphocysteine; by EIIA modification. Residues 273–293 form a disordered region; the sequence is YQGSGGGSAASNDDEEAKGKS. Residues 301–635 enclose the PTS EIIC type-2 domain; that stretch reads FYKHLMSGVS…GIVKKPVTEK (335 aa). Transmembrane regions (helical) follow at residues 312–332, 350–370, 392–412, 428–448, 470–490, 511–531, 544–564, 569–589, and 608–628; these read MLPFVVGGGILVAISFFWGIH, FIGGDNALKLIVAVLAGFIAM, NAGFLGGLIAGFLAGYVVILL, PVLIYPLFGIFITGVLMQFVV, NLVLMGIILGGMMAIDMGGPL, AAIMAGGMVPPLGIALATTIF, ITCYFMGAAFVTEGAIPFAAA, VIPAAVVGAAVAGGLTEFFRV, and MLYLLSIVIGAVVMAIILGIV.

The protein localises to the cell membrane. The enzyme catalyses D-fructose(out) + N(pros)-phospho-L-histidyl-[protein] = D-fructose 1-phosphate(in) + L-histidyl-[protein]. In terms of biological role, the phosphoenolpyruvate-dependent sugar phosphotransferase system (sugar PTS), a major carbohydrate active transport system, catalyzes the phosphorylation of incoming sugar substrates concomitantly with their translocation across the cell membrane. This system is involved in fructose transport. The sequence is that of PTS system fructose-specific EIIABC component (fruA) from Bacillus subtilis (strain 168).